A 432-amino-acid polypeptide reads, in one-letter code: Probable rhamnogalacturonase E (432 aa).

The first 21 residues, Met1 to Gly21, serve as a signal peptide directing secretion. Cys42 and Cys68 are disulfide-bonded. 3 N-linked (GlcNAc...) asparagine glycosylation sites follow: Asn53, Asn91, and Asn106. Residue Asp221 is the Proton donor of the active site. A disulfide bridge connects residues Cys223 and Cys240. Residues Asn241 and Asn256 are each glycosylated (N-linked (GlcNAc...) asparagine). His296 is an active-site residue. Disulfide bonds link Cys329–Cys335 and Cys357–Cys366.

This sequence belongs to the glycosyl hydrolase 28 family.

The protein localises to the secreted. In terms of biological role, pectinolytic enzymes consist of four classes of enzymes: pectine lyase, polygalacturonase, pectin methylesterase and rhamnogalacturonase. Hydrolyzes alpha-D-galacturonopyranosyl-(1,2)-alpha-L-rhamnopyranosyl linkages in the backbone of the hairy regions of pectins. The protein is Probable rhamnogalacturonase E (rhgE) of Aspergillus oryzae (strain ATCC 42149 / RIB 40) (Yellow koji mold).